Consider the following 176-residue polypeptide: RING-H2 finger protein ATL73 (176 aa).

The N-terminal stretch at 1–16 is a signal peptide; the sequence is MARFLLATQATPTISA. Residues 42–62 traverse the membrane as a helical segment; that stretch reads VIILAALLCALICALGINSVL. The RING-type; atypical zinc-finger motif lies at 113-155; that stretch reads CLICLGDFVEGETVRVLPKCNHGFHVKCIDTWLLSHSSCPTCR.

The protein belongs to the RING-type zinc finger family. ATL subfamily.

It is found in the membrane. The enzyme catalyses S-ubiquitinyl-[E2 ubiquitin-conjugating enzyme]-L-cysteine + [acceptor protein]-L-lysine = [E2 ubiquitin-conjugating enzyme]-L-cysteine + N(6)-ubiquitinyl-[acceptor protein]-L-lysine.. The protein operates within protein modification; protein ubiquitination. In Arabidopsis thaliana (Mouse-ear cress), this protein is RING-H2 finger protein ATL73 (ATL73).